Reading from the N-terminus, the 545-residue chain is Ribulokinase (545 aa).

It belongs to the ribulokinase family.

The enzyme catalyses D-ribulose + ATP = D-ribulose 5-phosphate + ADP + H(+). It carries out the reaction L-ribulose + ATP = L-ribulose 5-phosphate + ADP + H(+). Its pathway is carbohydrate degradation; L-arabinose degradation via L-ribulose; D-xylulose 5-phosphate from L-arabinose (bacterial route): step 2/3. This is Ribulokinase from Staphylococcus aureus (strain MRSA252).